We begin with the raw amino-acid sequence, 284 residues long: Elongation factor Ts (284 aa).

Positions 80-83 are involved in Mg(2+) ion dislocation from EF-Tu; that stretch reads TDFV.

Belongs to the EF-Ts family.

Its subcellular location is the cytoplasm. Its function is as follows. Associates with the EF-Tu.GDP complex and induces the exchange of GDP to GTP. It remains bound to the aminoacyl-tRNA.EF-Tu.GTP complex up to the GTP hydrolysis stage on the ribosome. The polypeptide is Elongation factor Ts (Neisseria gonorrhoeae (strain ATCC 700825 / FA 1090)).